The sequence spans 479 residues: NADH oxidase (479 aa).

FAD is bound by residues 8–12 (GVNHA), Asp33, Cys43, Val80, 111–114 (ASGA), Lys149, and Tyr177. The active-site Proton acceptor is the His11. The active-site Redox-active is the Cys43. Cys43 is subject to Cysteine sulfinic acid (-SO2H). Residues 170-185 (VAIV…LAEA), Asp197, and Gly264 contribute to the NAD(+) site. FAD-binding positions include 295–305 (LNHENVYVIGG), Leu322, Ala323, and Thr324. Ala353 is a binding site for NAD(+). Phe450 contacts FAD.

Belongs to the class-III pyridine nucleotide-disulfide oxidoreductase family. Requires FAD as cofactor.

It carries out the reaction 2 NADH + O2 + 2 H(+) = 2 NAD(+) + 2 H2O. Functionally, catalyzes the four-electron reduction of molecular oxygen to water. In Mycoplasma pneumoniae (strain ATCC 29342 / M129 / Subtype 1) (Mycoplasmoides pneumoniae), this protein is NADH oxidase (nox).